A 346-amino-acid chain; its full sequence is 4-hydroxy-2-oxohexanoate aldolase (346 aa).

The region spanning 7–259 (VRITDTSLRD…KTGIDFFDIA (253 aa)) is the Pyruvate carboxyltransferase domain. 15 to 16 (RD) lines the substrate pocket. Asp16 lines the Mn(2+) pocket. His19 functions as the Proton acceptor in the catalytic mechanism. Ser169 and His198 together coordinate substrate. Mn(2+) contacts are provided by His198 and His200. Substrate is bound at residue Tyr289.

Belongs to the 4-hydroxy-2-oxovalerate aldolase family. Homodimer. Forms a heterotetramer composed of two aldolase (HsaF) and two dehydrogenase (HsaG) subunits. Mn(2+) is required as a cofactor.

It carries out the reaction (S)-4-hydroxy-2-oxohexanoate = propanal + pyruvate. It catalyses the reaction (S)-4-hydroxy-2-oxopentanoate = acetaldehyde + pyruvate. In terms of biological role, involved in cholesterol degradation. Catalyzes the retro-aldol cleavage of 4-hydroxy-2-oxohexanoate (HOHA) to pyruvate and propanal. Can also catalyze the cleavage of 4-hydroxy-2-oxopentanoate (HOPA) to pyruvate and acetaldehyde. The aldehydes produced by this reaction are directly channeled to the dehydrogenase HsaG. This Mycobacterium bovis (strain ATCC BAA-935 / AF2122/97) protein is 4-hydroxy-2-oxohexanoate aldolase.